The chain runs to 174 residues: Shikimate kinase 2 (174 aa).

12–17 (GCGKTT) is an ATP binding site. Residues threonine 16 and aspartate 32 each contribute to the Mg(2+) site. The substrate site is built by aspartate 34, arginine 58, and glycine 79. Residues 112–126 (QAAPEEDLRPTLTGK) are LID domain. Arginine 120 contacts ATP. Arginine 139 is a substrate binding site.

This sequence belongs to the shikimate kinase family. AroL subfamily. Monomer. Mg(2+) is required as a cofactor.

The protein localises to the cytoplasm. The catalysed reaction is shikimate + ATP = 3-phosphoshikimate + ADP + H(+). Its pathway is metabolic intermediate biosynthesis; chorismate biosynthesis; chorismate from D-erythrose 4-phosphate and phosphoenolpyruvate: step 5/7. Its function is as follows. Catalyzes the specific phosphorylation of the 3-hydroxyl group of shikimic acid using ATP as a cosubstrate. The polypeptide is Shikimate kinase 2 (Shigella boydii serotype 18 (strain CDC 3083-94 / BS512)).